We begin with the raw amino-acid sequence, 277 residues long: Ribosomal RNA small subunit methyltransferase A (277 aa).

The S-adenosyl-L-methionine site is built by His20, Leu22, Gly47, Glu71, Asp94, and Asn116.

The protein belongs to the class I-like SAM-binding methyltransferase superfamily. rRNA adenine N(6)-methyltransferase family. RsmA subfamily.

It localises to the cytoplasm. It carries out the reaction adenosine(1518)/adenosine(1519) in 16S rRNA + 4 S-adenosyl-L-methionine = N(6)-dimethyladenosine(1518)/N(6)-dimethyladenosine(1519) in 16S rRNA + 4 S-adenosyl-L-homocysteine + 4 H(+). Functionally, specifically dimethylates two adjacent adenosines (A1518 and A1519) in the loop of a conserved hairpin near the 3'-end of 16S rRNA in the 30S particle. May play a critical role in biogenesis of 30S subunits. This Burkholderia sp protein is Ribosomal RNA small subunit methyltransferase A.